A 236-amino-acid polypeptide reads, in one-letter code: 2-C-methyl-D-erythritol 4-phosphate cytidylyltransferase (236 aa).

It belongs to the IspD/TarI cytidylyltransferase family. IspD subfamily. As to quaternary structure, homodimer.

The catalysed reaction is 2-C-methyl-D-erythritol 4-phosphate + CTP + H(+) = 4-CDP-2-C-methyl-D-erythritol + diphosphate. Its pathway is isoprenoid biosynthesis; isopentenyl diphosphate biosynthesis via DXP pathway; isopentenyl diphosphate from 1-deoxy-D-xylulose 5-phosphate: step 2/6. Its function is as follows. Catalyzes the formation of 4-diphosphocytidyl-2-C-methyl-D-erythritol from CTP and 2-C-methyl-D-erythritol 4-phosphate (MEP). This chain is 2-C-methyl-D-erythritol 4-phosphate cytidylyltransferase, found in Salmonella arizonae (strain ATCC BAA-731 / CDC346-86 / RSK2980).